Here is a 359-residue protein sequence, read N- to C-terminus: Peptide chain release factor 1 (359 aa).

N5-methylglutamine is present on glutamine 236.

This sequence belongs to the prokaryotic/mitochondrial release factor family. Methylated by PrmC. Methylation increases the termination efficiency of RF1.

The protein resides in the cytoplasm. In terms of biological role, peptide chain release factor 1 directs the termination of translation in response to the peptide chain termination codons UAG and UAA. This is Peptide chain release factor 1 from Streptococcus pyogenes serotype M12 (strain MGAS2096).